Reading from the N-terminus, the 156-residue chain is ATP synthase subunit b (156 aa).

A helical membrane pass occupies residues isoleucine 5–proline 27.

The protein belongs to the ATPase B chain family. F-type ATPases have 2 components, F(1) - the catalytic core - and F(0) - the membrane proton channel. F(1) has five subunits: alpha(3), beta(3), gamma(1), delta(1), epsilon(1). F(0) has three main subunits: a(1), b(2) and c(10-14). The alpha and beta chains form an alternating ring which encloses part of the gamma chain. F(1) is attached to F(0) by a central stalk formed by the gamma and epsilon chains, while a peripheral stalk is formed by the delta and b chains.

It localises to the cell inner membrane. F(1)F(0) ATP synthase produces ATP from ADP in the presence of a proton or sodium gradient. F-type ATPases consist of two structural domains, F(1) containing the extramembraneous catalytic core and F(0) containing the membrane proton channel, linked together by a central stalk and a peripheral stalk. During catalysis, ATP synthesis in the catalytic domain of F(1) is coupled via a rotary mechanism of the central stalk subunits to proton translocation. In terms of biological role, component of the F(0) channel, it forms part of the peripheral stalk, linking F(1) to F(0). The chain is ATP synthase subunit b from Francisella tularensis subsp. holarctica (strain OSU18).